Reading from the N-terminus, the 326-residue chain is MKVLLSALLLLLFAFEPSASGKKLSDPVLSKRMELYHKIEAVTQIPWYALAAVDQYEENVRSNRKDLPEKAGIISIYIPDDIWSGPENPNPKDDAPLSIKVFDGIGMDGDGDGKAEVSNDEDILYTFSQYLLSYGTDEDNIRIGLWNYYRRDQTVGIISEFMKLFKAYGHIDLGEHAFPLPIRTDYSYRSTWGDARGFGGRRIHEGTDIFAHYGLPVKSTCYGVVEMKGWNRFGGWRIGIRDINNTYHYFAHLNGFAKGIKTGQIVEPGQVIGSVGSSGYGPPGTAGKFPPHLHYGMYKDNGRTEWSFDPYPHLRAWERYEYQKKK.

Positions 1-19 are cleaved as a signal peptide; that stretch reads MKVLLSALLLLLFAFEPSA. Residues histidine 204, aspartate 208, histidine 292, and histidine 294 each coordinate Zn(2+).

Belongs to the peptidase M23B family. Requires Zn(2+) as cofactor.

In terms of biological role, L-Ala--D-Glu endopeptidase involved in production of single L-alanine side chains from tetrapeptides in the spore cortex peptidoglycan. Therefore, is required for the endospore cortex maturation. The protein is L-Ala--D-Glu endopeptidase (lytH) of Bacillus subtilis (strain 168).